The primary structure comprises 1435 residues: Protein clueless (1435 aa).

Residues 1-97 are disordered; the sequence is MALEMDSKNS…KPEGDGDADA (97 aa). The segment covering 18 to 35 has biased composition (low complexity); the sequence is AAAATTKTNKAKENNNLA. Positions 38-50 are enriched in polar residues; sequence KKNQSQNLVNGNG. The segment covering 58–67 has biased composition (basic residues); it reads TKKKGKKNRN. Ser266 carries the post-translational modification Phosphoserine. One can recognise a Clu domain in the interval 420–662; the sequence is RAEDAFSSKL…RTFPPDVNFL (243 aa). 2 stretches are compositionally biased toward basic and acidic residues: residues 719-731 and 752-762; these read KKPEETQSEEKKQ and PNEKEKDTPVE. Disordered regions lie at residues 719–762 and 952–998; these read KKPE…TPVE and VSND…SSSS. Positions 959 to 975 are enriched in basic residues; it reads KKRGGNGGKHNKHKSSK. Low complexity predominate over residues 988 to 998; sequence NGGSTTSSSSS. 3 TPR repeats span residues 1096–1129, 1222–1255, and 1257–1290; these read AYNFYTTGQAKIQQGLFKEGYELISEALNLLNNV, ALIDSNISLILHALGEYELSLRFIEHALKLNLKY, and GNKAMHVAVSYHLMARTQSCMGDFRSALNNEKET. Residues 1407 to 1435 form a disordered region; sequence EVLAPQDNNKEQAATAQQLTNGDKVAVSS. The span at 1417-1435 shows a compositional bias: polar residues; the sequence is EQAATAQQLTNGDKVAVSS.

Belongs to the CLU family.

Its subcellular location is the cytoplasm. Its function is as follows. mRNA-binding protein involved in proper cytoplasmic distribution of mitochondria. The protein is Protein clueless of Drosophila persimilis (Fruit fly).